Here is a 393-residue protein sequence, read N- to C-terminus: S-adenosylmethionine synthase 1 (393 aa).

Glu9 contributes to the Mg(2+) binding site. Residue His15 coordinates ATP. Glu43 lines the K(+) pocket. L-methionine-binding residues include Glu56 and Gln99. ATP-binding positions include 167–169, 235–238, Asp246, 252–253, Ala269, Lys273, and Lys277; these read DGK, SGRF, and RK. Position 246 (Asp246) interacts with L-methionine. An L-methionine-binding site is contributed by Lys277.

This sequence belongs to the AdoMet synthase family. Homotetramer. The cofactor is Mn(2+). Requires Mg(2+) as cofactor. Co(2+) serves as cofactor. K(+) is required as a cofactor.

It is found in the cytoplasm. It catalyses the reaction L-methionine + ATP + H2O = S-adenosyl-L-methionine + phosphate + diphosphate. It participates in amino-acid biosynthesis; S-adenosyl-L-methionine biosynthesis; S-adenosyl-L-methionine from L-methionine: step 1/1. Functionally, catalyzes the formation of S-adenosylmethionine from methionine and ATP. The reaction comprises two steps that are both catalyzed by the same enzyme: formation of S-adenosylmethionine (AdoMet) and triphosphate, and subsequent hydrolysis of the triphosphate. This Solanum tuberosum (Potato) protein is S-adenosylmethionine synthase 1 (METK1).